A 91-amino-acid polypeptide reads, in one-letter code: Bacterial microcompartment shell protein PduJ (91 aa).

A BMC domain is found at 4–88 (ALGLVETKGL…PHSDVEAILP (85 aa)).

This sequence belongs to the bacterial microcompartments protein family. In terms of assembly, homohexamer with a central pore of about 5.7 Angstroms in diameter. Interacts with PduP, which targets PduP to the BMC.

The protein localises to the bacterial microcompartment. The protein operates within polyol metabolism; 1,2-propanediol degradation. Functionally, one of the major shell proteins of the bacterial microcompartment (BMC) dedicated to 1,2-propanediol (1,2-PD) degradation. The isolated BMC shell component protein ratio for J:A:B':B:K:T:U is approximately 15:10:7:6:1:1:2. At least one of PduA or PduJ is required for BMC assembly; it must be encoded as the first gene in the pdu operon. Required for structural integrity of BMCs and to mitigate propionaldehyde toxicity, probably joins facets responsible for BMC closure. Edge residues (particularly Lys-25) are important for function and assembly of the BMC. 80% identical to PduA; although their pore regions appear structurally identical, unlike PduA plays no role in 1,2-PD diffusion into or out of the BMC shell. If pduJ is cloned in the chromosomal position of pduA it is able to complement a pduA deletion; it then has a functional pore as it assumes the transport functions of PduA. Overexpression of this protein leads to aberrant filaments that extend the length of the cell, cross the cleavage furrow and impair division. The filaments form nanotubes with a hollow center. Modeling suggests PduJ is probably the hub for binding multiple enzymes to the interior of the BMC; modeling suggests PduC, PduD, PduG and PduM are targeted to PduJ. In terms of biological role, the 1,2-propanediol (1,2-PD) degradation bacterial microcompartment (BMC) concentrates low levels of 1,2-PD catabolic enzymes, concentrates volatile reaction intermediates thus enhancing pathway flux and keeps the level of toxic, mutagenic propionaldehyde low. The chain is Bacterial microcompartment shell protein PduJ from Salmonella typhimurium (strain LT2 / SGSC1412 / ATCC 700720).